The following is a 579-amino-acid chain: Membrane frizzled-related protein (579 aa).

The Cytoplasmic segment spans residues 1 to 69; the sequence is MKDFSDVILC…RPDCRFSWLC (69 aa). Residues 70 to 90 form a helical; Signal-anchor for type II membrane protein membrane-spanning segment; sequence VLLLSSLLLLLLGLLVAIILA. The Extracellular segment spans residues 91–579; the sequence is QLQAAPPSGA…AADLEACAQP (489 aa). Residues 100-143 are disordered; that stretch reads ASHSPLPAGGLTTTTTTPTITTSQAAGTPKGQQESGVSPSPQST. Residues 111–121 show a composition bias toward low complexity; that stretch reads TTTTTTPTITT. Residues 122–143 are compositionally biased toward polar residues; the sequence is SQAAGTPKGQQESGVSPSPQST. Intrachain disulfides connect C144–C170 and C197–C216. Residues 144–253 enclose the CUB 1 domain; that stretch reads CGGLLSGPRG…FGFHAWYQAM (110 aa). N227 carries an N-linked (GlcNAc...) asparagine glycan. In terms of domain architecture, LDL-receptor class A 1 spans 259-295; the sequence is SCAHDEFRCDQLICLLPDSVCDGFANCADGSDETNCS. Intrachain disulfides connect C260–C272, C267–C285, C279–C294, C301–C327, and C354–C377. The 114-residue stretch at 301–414 folds into the CUB 2 domain; it reads CGGNLTGLQG…GGFSATYLAF (114 aa). The N-linked (GlcNAc...) asparagine glycan is linked to N415. Residues 420 to 455 enclose the LDL-receptor class A 2 domain; that stretch reads PCGPSELSCQAGGCKGVQWMCDMWRDCTDGSDDNCS. Intrachain disulfides connect C421–C433, C428–C446, C440–C454, C466–C528, C474–C521, C512–C549, C538–C576, and C542–C564. Residues 461 to 579 enclose the FZ domain; that stretch reads PPELACEPVQ…AADLEACAQP (119 aa).

As to quaternary structure, interacts with C1QTNF5. Specifically expressed in brain. Strongly expressed in medulla oblongata and to a lower extent in hippocampus and corpus callosum. Expressed in keratinocytes.

The protein resides in the apical cell membrane. In terms of biological role, may play a role in eye development. The polypeptide is Membrane frizzled-related protein (MFRP) (Homo sapiens (Human)).